The sequence spans 213 residues: Retinitis pigmentosa 9 protein homolog (213 aa).

Residues 1-61 (MSSGAGSRRP…IKEDETKPED (61 aa)) form a disordered region. The segment at 1-147 (MSSGAGSRRP…RENKRHEKDV (147 aa)) is PIM1-binding. 2 stretches are compositionally biased toward basic and acidic residues: residues 9-21 (RPREPPEHELQRR) and 52-61 (IKEDETKPED). A CCHC-type zinc finger spans residues 96–114 (QCWRCKRYGHRTGDKECPF). K121 is covalently cross-linked (Glycyl lysine isopeptide (Lys-Gly) (interchain with G-Cter in SUMO2)). The interval 154–213 (QLLEDSTSDDDGSSSSSSGDREKRKKRKKKEKHKKRKKEKKKKKKRKHKASKSSESSDSE) is disordered. The span at 176 to 204 (KRKKRKKKEKHKKRKKEKKKKKKRKHKAS) shows a compositional bias: basic residues. 2 positions are modified to phosphoserine; by PIM1; in vitro: S204 and S206.

In terms of assembly, binds to PIM1. Binds to ZNHIT4. As to expression, highly expressed in the testis, moderately in the kidney, liver and spleen, and weakly in the skeletal muscle and heart.

It is found in the nucleus. In terms of biological role, is thought to be a target protein for the PIM1 kinase. May play some roles in B-cell proliferation in association with PIM1. This is Retinitis pigmentosa 9 protein homolog (rp9) from Mus musculus (Mouse).